Here is a 544-residue protein sequence, read N- to C-terminus: Methionine--tRNA ligase 2 (544 aa).

Residues 10–20 (PYANGSLHLGH) carry the 'HIGH' region motif. 4 residues coordinate Zn(2+): Cys141, Cys144, Cys153, and Cys156. The 'KMSKS' region motif lies at 329–333 (KLSTS). Thr332 serves as a coordination point for ATP.

The protein belongs to the class-I aminoacyl-tRNA synthetase family. MetG type 1 subfamily. Monomer. Zn(2+) is required as a cofactor.

The protein resides in the cytoplasm. The catalysed reaction is tRNA(Met) + L-methionine + ATP = L-methionyl-tRNA(Met) + AMP + diphosphate. In terms of biological role, is required not only for elongation of protein synthesis but also for the initiation of all mRNA translation through initiator tRNA(fMet) aminoacylation. The chain is Methionine--tRNA ligase 2 from Bacillus cereus (strain ATCC 14579 / DSM 31 / CCUG 7414 / JCM 2152 / NBRC 15305 / NCIMB 9373 / NCTC 2599 / NRRL B-3711).